The sequence spans 206 residues: Transcription elongation factor A protein-like 5 (206 aa).

Over residues 1-26 (MEKLYKENEGKPENERNLESEGKPED) the composition is skewed to basic and acidic residues. The disordered stretch occupies residues 1-206 (MEKLYKENEG…QKDLEDVPYV (206 aa)). The segment covering 27-42 (EGSTEDEGKSDEEEKP) has biased composition (acidic residues). Residues 43–56 (DMEGKTECEGKRED) are compositionally biased toward basic and acidic residues. Residues 57 to 70 (EGEPGDEGQLEDEG) are compositionally biased toward acidic residues. 4 stretches are compositionally biased toward basic and acidic residues: residues 71-86 (NQEK…KPQS), 102-113 (AAEKRPAEDYVP), 121-160 (DRGT…EELR), and 196-206 (GQKDLEDVPYV).

It belongs to the TFS-II family. TFA subfamily.

It localises to the nucleus. May be involved in transcriptional regulation. The chain is Transcription elongation factor A protein-like 5 (TCEAL5) from Homo sapiens (Human).